Here is an 837-residue protein sequence, read N- to C-terminus: Mannosyl-oligosaccharide glucosidase (837 aa).

Basic residues predominate over residues 1–10 (MARGERRRRA). Over 1–38 (MARGERRRRAVPAEGVRTAERAARGGPGRRDGRGGGPR) the chain is Cytoplasmic. A disordered region spans residues 1 to 39 (MARGERRRRAVPAEGVRTAERAARGGPGRRDGRGGGPRS). An Endoplasmic reticulum targeting motif is present at residues 3–9 (RGERRRR). Residues 17-33 (RTAERAARGGPGRRDGR) are compositionally biased toward basic and acidic residues. A helical; Signal-anchor for type II membrane protein membrane pass occupies residues 39–59 (STAGGVALAVVVLSLALGMSG). Residues 60 to 837 (RWVLAWYRAR…LVLLAMAEDY (778 aa)) are Lumenal-facing. The interval 76–137 (SAPPVLPADS…PGTPKLRHTC (62 aa)) is required for endoplasmic reticulum targeting. The active-site Proton donor is Asp-583. Asn-657 carries N-linked (GlcNAc...) asparagine glycosylation. Glu-807 serves as the catalytic Proton acceptor.

Belongs to the glycosyl hydrolase 63 family.

It localises to the endoplasmic reticulum membrane. It catalyses the reaction N(4)-(alpha-D-Glc-(1-&gt;2)-alpha-D-Glc-(1-&gt;3)-alpha-D-Glc-(1-&gt;3)-alpha-D-Man-(1-&gt;2)-alpha-D-Man-(1-&gt;2)-alpha-D-Man-(1-&gt;3)-[alpha-D-Man-(1-&gt;2)-alpha-D-Man-(1-&gt;3)-[alpha-D-Man-(1-&gt;2)-alpha-D-Man-(1-&gt;6)]-alpha-D-Man-(1-&gt;6)]-beta-D-Man-(1-&gt;4)-beta-D-GlcNAc-(1-&gt;4)-beta-D-GlcNAc)-L-asparaginyl-[protein] + H2O = N(4)-(alpha-D-Glc-(1-&gt;3)-alpha-D-Glc-(1-&gt;3)-alpha-D-Man-(1-&gt;2)-alpha-D-Man-(1-&gt;2)-alpha-D-Man-(1-&gt;3)-[alpha-D-Man-(1-&gt;2)-alpha-D-Man-(1-&gt;3)-[alpha-D-Man-(1-&gt;2)-alpha-D-Man-(1-&gt;6)]-alpha-D-Man-(1-&gt;6)]-beta-D-Man-(1-&gt;4)-beta-D-GlcNAc-(1-&gt;4)-beta-D-GlcNAc)-L-asparaginyl-[protein] + beta-D-glucose. It functions in the pathway glycan metabolism; N-glycan degradation. With respect to regulation, inhibited by 1-deoxynojirimycin (40% inhibition) and N,N-dimethyl-deoxynojirimycin (85% inhibition). In the context of N-glycan degradation, cleaves the distal alpha 1,2-linked glucose residue from the Glc(3)Man(9)GlcNAc(2) oligosaccharide precursor in a highly specific manner. The chain is Mannosyl-oligosaccharide glucosidase from Homo sapiens (Human).